The sequence spans 478 residues: Lysine histidine transporter-like 7 (478 aa).

At 1–63 the chain is on the cytoplasmic side; that stretch reads MSIALGNLFD…ITESRKGNVY (63 aa). Residues 15–45 form a disordered region; sequence ESGGSPLFMSPAPSTDPQPISGEKNGGDGGR. Residues 64–86 form a helical membrane-spanning segment; sequence TATFHLLCSGIGLQVILLPAAFA. The Extracellular segment spans residues 87–89; that stretch reads ALG. The helical transmembrane segment at 90–112 threads the bilayer; the sequence is WVWGTIILTVGFVWKLYTTWLLV. Over 113-140 the chain is Cytoplasmic; sequence QLHEAVPGIRISRYVRLAIASFGVKLGK. Residues 141 to 161 form a helical membrane-spanning segment; the sequence is LLGIFPVMYLSGGACTILVIT. Residues 162-177 lie on the Extracellular side of the membrane; sequence GGKSIQQLLQIMSDDN. A helical membrane pass occupies residues 178–198; sequence TAPLTSVQCFLVFSCIAMIMS. Topologically, residues 199–205 are cytoplasmic; sequence QFPNLNS. The helical transmembrane segment at 206-226 threads the bilayer; it reads LFGVSLIGAFMGIAYCTVIWI. Topologically, residues 227–241 are extracellular; the sequence is LPVASDSQRTQVSVS. Residues 242–262 traverse the membrane as a helical segment; sequence YATMDKSFVHIFNAIGLIALV. The Cytoplasmic segment spans residues 263–291; the sequence is YRGNNLVLEIQGTLPSDSKNPSCKTMWRA. The chain crosses the membrane as a helical span at residues 292-312; the sequence is VMISHALVAICMFPLTFAVYW. Over 313 to 340 the chain is Extracellular; the sequence is AYGDKIPATGGPVGNYLKLYTQEHSKRA. Residues 341–361 traverse the membrane as a helical segment; sequence ACFIHLTFIFSCLCSYPINLM. Over 362–379 the chain is Cytoplasmic; the sequence is PACDNIEMVYITKKKKPA. The helical transmembrane segment at 380-402 threads the bilayer; sequence SIIVRMMLRVFLSLVCFTIAVGF. Over 403–406 the chain is Extracellular; the sequence is PFLP. The chain crosses the membrane as a helical span at residues 407 to 429; that stretch reads YLAVLIGAIALLVTFTYPCFMWI. Topologically, residues 430–439 are cytoplasmic; it reads SIKKPQRKSP. A helical transmembrane segment spans residues 440–460; it reads MWLFNVLVGCLGASLSVLLLV. Residues 461 to 478 lie on the Extracellular side of the membrane; the sequence is ASAMRLAQKGLHANFFRP.

Belongs to the amino acid/polyamine transporter 2 family. Amino acid/auxin permease (AAAP) (TC 2.A.18.2) subfamily.

It is found in the cell membrane. Amino acid transporter. The protein is Lysine histidine transporter-like 7 of Arabidopsis thaliana (Mouse-ear cress).